The chain runs to 560 residues: Muellerian-inhibiting factor (560 aa).

The N-terminal stretch at 1–24 (MRDLPLTSLALVLSALGALLGTEA) is a signal peptide. Positions 25 to 451 (LRAEEPAVGT…DPRGPGRAQR (427 aa)) are excised as a propeptide. An N-linked (GlcNAc...) asparagine glycan is attached at Asn-64. Residues 259–287 (PLPAHGQLDTVPFPPPRPSAELEESPPSA) are disordered. Asn-329 carries N-linked (GlcNAc...) asparagine glycosylation. Cystine bridges form between Cys-462-Cys-526, Cys-488-Cys-557, and Cys-492-Cys-559.

The protein belongs to the TGF-beta family. Homodimer; disulfide-linked. In terms of processing, preproprotein is proteolytically processed to generate N- and C-terminal cleavage products that homodimerize and associate to form a biologically active non-covalent complex. Binding of the non-covalent complex to AMHR2 induces dissociation of the pro-region from the mature C-terminal dimer. The N-terminal portion of the protein, despite having no intrinsic activity, has the role of amplifying the activity of the C-terminus. As to expression, in ovaries, AMH is detected in granulosa cells of early growing follicles.

The protein localises to the secreted. Its function is as follows. Plays an important role in several reproductive functions. Induces Muellerian duct regression during male fetal sexual differentiation. Also plays a role in Leydig cell differentiation and function. In female acts as a negative regulator of the primordial to primary follicle transition and decreases FSH sensitivity of growing follicles. AMH signals by binding to a specific type-II receptor, AMHR2, that heterodimerizes with type-I receptors (ACVR1 and BMPR1A), and recruiting SMAD proteins that are translocated to the nucleus to regulate target gene expression. The protein is Muellerian-inhibiting factor of Homo sapiens (Human).